Consider the following 397-residue polypeptide: Beta-lactamase (397 aa).

Positions 1–26 (MRDTRFPCLCGIAASTLLFATTPAIA) are cleaved as a signal peptide. The active-site Acyl-ester intermediate is Ser90. Ser90, Gln146, Tyr177, Asn179, and Asn370 together coordinate a beta-lactam. Tyr177 serves as the catalytic Proton acceptor.

This sequence belongs to the class-C beta-lactamase family. Monomer.

Its subcellular location is the periplasm. The enzyme catalyses a beta-lactam + H2O = a substituted beta-amino acid. Class C beta-lactamase which confers resistance to penicillins and cephalosporins. Has nitrocefin-hydrolyzing activity. This chain is Beta-lactamase (ampC), found in Pseudomonas aeruginosa (strain ATCC 15692 / DSM 22644 / CIP 104116 / JCM 14847 / LMG 12228 / 1C / PRS 101 / PAO1).